The sequence spans 817 residues: Dolichyl-phosphate-mannose--protein mannosyltransferase 1 (817 aa).

Ser-2 bears the N-acetylserine mark. Residues 2–50 (SEEKTYKRVEQDDPVPELDIKQGPVRPFIVTDPSAELASLRTMVTLKEK) lie on the Cytoplasmic side of the membrane. The helical transmembrane segment at 51 to 70 (LLVACLAVFTAVIRLHGLAW) threads the bilayer. At 71–135 (PDSVVFDEVH…DSFPSTTPYV (65 aa)) the chain is on the lumenal side. A helical transmembrane segment spans residues 136–154 (LMRFFSASLGALTVILMYM). Over 155–179 (TLRYSGVRMWVALMSAICFAVENSY) the chain is Cytoplasmic. The chain crosses the membrane as a helical span at residues 180 to 200 (VTISRYILLDAPLMFFIAAAV). Over 201–234 (YSFKKYEMYPANSLNAYKSLLATGIALGMASSSK) the chain is Lumenal. The chain crosses the membrane as a helical span at residues 235 to 259 (WVGLFTVTWVGLLCIWRLWFMIGDL). Over 260–273 (TKSSKSIFKVAFAK) the chain is Cytoplasmic. Residues 274-291 (LAFLLGVPFALYLVFFYI) form a helical membrane-spanning segment. Residues 292-584 (HFQSLTLDGD…GENNRNVYLL (293 aa)) lie on the Lumenal side of the membrane. MIR domains follow at residues 324–378 (VADV…LELY), 388–448 (FQNL…VEID), and 459–514 (ERVI…VENN). Residues Asn-390 and Asn-513 are each glycosylated (N-linked (GlcNAc...) asparagine). Residues 585–605 (GNAIVWWAVTAFIGIFGLIVI) form a helical membrane-spanning segment. Topologically, residues 606 to 685 (TELFSWQLGK…SYVFRSKRQM (80 aa)) are cytoplasmic. The helical transmembrane segment at 686 to 710 (GYAVVITFLAASVYFFKSFSPIIYG) threads the bilayer. Residues 711–817 (TPWTQELCQK…LKVEKRAVLE (107 aa)) are Lumenal-facing. An N-linked (GlcNAc...) asparagine glycan is attached at Asn-743.

This sequence belongs to the glycosyltransferase 39 family. As to quaternary structure, PMT1 and PMT2 form a functional heterodimer. The complex interacts with endoplasmic reticulum proteins EMP24, ERV25, ERP1, ERP2, CDC48, HRD1, USA1, YOS9, ERO1, PDI1, UBR1, Cue4, DFM1 and TED1. Forms also a minor complex with PMT3.

It localises to the endoplasmic reticulum membrane. The catalysed reaction is a di-trans,poly-cis-dolichyl beta-D-mannosyl phosphate + L-seryl-[protein] = 3-O-(alpha-D-mannosyl)-L-seryl-[protein] + a di-trans,poly-cis-dolichyl phosphate + H(+). It catalyses the reaction a di-trans,poly-cis-dolichyl beta-D-mannosyl phosphate + L-threonyl-[protein] = 3-O-(alpha-D-mannosyl)-L-threonyl-[protein] + a di-trans,poly-cis-dolichyl phosphate + H(+). The protein operates within protein modification; protein glycosylation. Protein O-mannosyltransferase involved in O-glycosylation which is essential for cell wall rigidity. Forms a heterodimeric complex with PMT2 and more rarely with PMT3 to transfer mannose from Dol-P-mannose to Ser or Thr residues on proteins. The PMT1-PMT2 complex participates in oxidative protein folding, ER-associated protein degradation (ERAD), as well as ER export. Required for incorporation of proteins in the cell wall. The polypeptide is Dolichyl-phosphate-mannose--protein mannosyltransferase 1 (Saccharomyces cerevisiae (strain ATCC 204508 / S288c) (Baker's yeast)).